Here is an 868-residue protein sequence, read N- to C-terminus: Alanine--tRNA ligase (868 aa).

Positions 553, 557, 657, and 661 each coordinate Zn(2+). Residues 831-851 (GGKGGGRADMAQAGGSRPQAL) form a disordered region.

Belongs to the class-II aminoacyl-tRNA synthetase family. The cofactor is Zn(2+).

The protein localises to the cytoplasm. It catalyses the reaction tRNA(Ala) + L-alanine + ATP = L-alanyl-tRNA(Ala) + AMP + diphosphate. Catalyzes the attachment of alanine to tRNA(Ala) in a two-step reaction: alanine is first activated by ATP to form Ala-AMP and then transferred to the acceptor end of tRNA(Ala). Also edits incorrectly charged Ser-tRNA(Ala) and Gly-tRNA(Ala) via its editing domain. This is Alanine--tRNA ligase from Chromohalobacter salexigens (strain ATCC BAA-138 / DSM 3043 / CIP 106854 / NCIMB 13768 / 1H11).